The sequence spans 94 residues: Co-chaperonin GroES (94 aa).

Belongs to the GroES chaperonin family. In terms of assembly, heptamer of 7 subunits arranged in a ring. Interacts with the chaperonin GroEL.

It localises to the cytoplasm. Functionally, together with the chaperonin GroEL, plays an essential role in assisting protein folding. The GroEL-GroES system forms a nano-cage that allows encapsulation of the non-native substrate proteins and provides a physical environment optimized to promote and accelerate protein folding. GroES binds to the apical surface of the GroEL ring, thereby capping the opening of the GroEL channel. This chain is Co-chaperonin GroES, found in Exiguobacterium sibiricum (strain DSM 17290 / CCUG 55495 / CIP 109462 / JCM 13490 / 255-15).